The following is a 555-amino-acid chain: Potassium-transporting ATPase potassium-binding subunit (555 aa).

10 helical membrane-spanning segments follow: residues 2 to 22 (IWVAVVITMLLFILVAKPTGI), 60 to 80 (QYALSLVLLNGFMIVVVYFIF), 130 to 150 (IGITFLMFAAPATTLAIVMAF), 173 to 193 (VFLPIAFIAALVFVALGVPQT), 246 to 266 (MSNILQMMLMMLLPTALPFTY), 278 to 298 (ILFVSLFMVFLLGFITITTSE), 374 to 394 (AGFVNIIMYAIIAVFISGLMV), 412 to 432 (LIAVTILFHPLLILGFSALAL), 483 to 503 (LVMFLGRYFSLITMLAVAASL), and 525 to 545 (GIFIGTIVIVGALTFFPMLVL).

This sequence belongs to the KdpA family. As to quaternary structure, the system is composed of three essential subunits: KdpA, KdpB and KdpC.

Its subcellular location is the cell membrane. In terms of biological role, part of the high-affinity ATP-driven potassium transport (or Kdp) system, which catalyzes the hydrolysis of ATP coupled with the electrogenic transport of potassium into the cytoplasm. This subunit binds the extracellular potassium ions and delivers the ions to the membrane domain of KdpB through an intramembrane tunnel. The sequence is that of Potassium-transporting ATPase potassium-binding subunit from Bacillus mycoides (strain KBAB4) (Bacillus weihenstephanensis).